Consider the following 284-residue polypeptide: Four and a half LIM domains protein 5 (284 aa).

Residues 8 to 32 (CQYCTSSLIGKKYVLKDDNLYCISC) form a C4-type zinc finger. LIM zinc-binding domains follow at residues 39-100 (NYCE…ECSS), 101-160 (KCFH…KEFA), and 161-220 (HYCN…LYAK).

In terms of assembly, interacts with CREM (via the third LIM domain). Interacts (via second LIM domain) with SPAG8. In terms of tissue distribution, testis-specific, temporal expression is coordinated with CREM.

It is found in the nucleus. Its function is as follows. May be involved in the regulation of spermatogenesis. Stimulates CREM transcriptional activity in a phosphorylation-independent manner. This is Four and a half LIM domains protein 5 (Fhl5) from Mus musculus (Mouse).